Here is a 113-residue protein sequence, read N- to C-terminus: Bactofilin BacN (113 aa).

The protein belongs to the bactofilin family. Interacts with BacO and BacP, the 3 proteins colocalize as an extended structure.

The protein localises to the cytoplasm. Its subcellular location is the cytoskeleton. Functionally, a non-essential component of the chromosome segregation machinery. Positions the ParA-ParB-parS chromosome segregation machinery within the cell; BacP seems to be the most important bactofilin in this process. Forms a heteropolymeric, subpolar scaffold in the cell; BacP probably forms the core, BacO contributes to position and integrity while BacN does not seem to contribute to assembly. This is Bactofilin BacN from Myxococcus xanthus (strain DK1622).